A 453-amino-acid chain; its full sequence is Zinc finger CCCH domain-containing protein 26 (453 aa).

A compositionally biased stretch (polar residues) spans 1-15 (MSETQQQVQNSTGSI). Residues 1–47 (MSETQQQVQNSTGSIRSPDKIEDTFRRMKVNEDNMEQSSPYPDRPGE) are disordered. Ser2 carries the N-acetylserine modification. Positions 17 to 32 (SPDKIEDTFRRMKVNE) are enriched in basic and acidic residues. C3H1-type zinc fingers lie at residues 44–72 (RPGE…HPLT), 95–112 (ETGA…HPKD), 129–157 (RQGE…HPHP), 261–289 (FSER…HPKE), and 307–335 (RPGQ…HSML). A compositionally biased stretch (polar residues) spans 360 to 379 (STNLRISSPPSPSDMTTLSN). Positions 360–453 (STNLRISSPP…KVQDSSDKST (94 aa)) are disordered. The span at 391–407 (ETEKQDDSPTEPEKSEV) shows a compositional bias: basic and acidic residues. A compositionally biased stretch (polar residues) spans 413–422 (PNGSDSTSLP). The span at 441-453 (DSSKVQDSSDKST) shows a compositional bias: basic and acidic residues.

The protein localises to the nucleus. The polypeptide is Zinc finger CCCH domain-containing protein 26 (ZFN2) (Arabidopsis thaliana (Mouse-ear cress)).